A 423-amino-acid polypeptide reads, in one-letter code: Gamma-glutamyl phosphate reductase (423 aa).

The protein belongs to the gamma-glutamyl phosphate reductase family.

The protein resides in the cytoplasm. It catalyses the reaction L-glutamate 5-semialdehyde + phosphate + NADP(+) = L-glutamyl 5-phosphate + NADPH + H(+). It functions in the pathway amino-acid biosynthesis; L-proline biosynthesis; L-glutamate 5-semialdehyde from L-glutamate: step 2/2. Catalyzes the NADPH-dependent reduction of L-glutamate 5-phosphate into L-glutamate 5-semialdehyde and phosphate. The product spontaneously undergoes cyclization to form 1-pyrroline-5-carboxylate. The chain is Gamma-glutamyl phosphate reductase from Paracoccus denitrificans (strain Pd 1222).